The following is a 603-amino-acid chain: MAQADFVSPTSIDVSEKKEVEFHKKVDHVENPPLSTESAKLEAEEVAAEKLNSEHLLENEFAPITDPTHRRVSKNPDGAELFQFEDEPSYYYVVATYLTYLVLIIIGHVRDFFGKRFHKDDYKYLKDNDGYAPLYNHFDNFYVRRLQHRINDCFSRPTMGVPGRVIRLMNRYSTDSNSTFKLTGDTSLALNVSSYNYLGFAQSHGPCATKVEEAMQKYGLSTCSSNAICGTYGLHKEVEELTANFVGKPAALVFSQGFSTNATVFSTLMCPGSLIISDELNHTSIRFGARLSGANIRVYKHNDMTDLERVLREVISQGQPRTHRPYSKILVVIEGLYSMEGNFCDLPKVVELKNRYKFYLFIDEAHSIGAIGPRGGGICDYFGISTDHVDILMGTFTKSFGAAGGYISATPNIINKLRVTNPGYVYAESMSPAVLAQIKSSFLEIMDNSPTSAGLERIERLAFNSRYIRLGLKRLGFIIFGNDDSPVVPLLLYNPGKINAFSHEMLKRGIAVVVVGYPACPLLTSRVRFCFSASHNKADMDYFLRACDEVGEKLQLKFSTGAAGEDVGKTNVEKMKKNQGWFKPPRWKIEDVLKHGVHDALTQ.

A helical transmembrane segment spans residues 90–107 (YYYVVATYLTYLVLIIIG). Position 398 is an N6-(pyridoxal phosphate)lysine (lysine 398).

This sequence belongs to the class-II pyridoxal-phosphate-dependent aminotransferase family. As to quaternary structure, lcb1 and lcb2 encode essential subunits of the enzyme and form a heterodimer. It depends on pyridoxal 5'-phosphate as a cofactor.

The protein resides in the cytoplasm. Its subcellular location is the endoplasmic reticulum. The protein localises to the membrane. The catalysed reaction is L-serine + hexadecanoyl-CoA + H(+) = 3-oxosphinganine + CO2 + CoA. It functions in the pathway lipid metabolism; sphingolipid metabolism. In terms of biological role, catalytic subunit of serine palmitoyltransferase (SPT), which catalyzes the committed step in the synthesis of sphingolipids, the condensation of serine with palmitoyl CoA to form the long chain base 3-ketosphinganine. The chain is Serine palmitoyltransferase 2 (lcb2) from Schizosaccharomyces pombe (strain 972 / ATCC 24843) (Fission yeast).